The sequence spans 296 residues: MAECSTLESLIEMGFSSTRAEKALTATGNQGIEPAMDWLVEHEDDPDIDEPSVVVPEGSSTDTADTTDTTDTTDTQGMDTSAERLPLTEEEKEKQTKRMMELVAQKQNEREEREKKERIEQEKQRRKHGQELSAIKQKMQEQEMQKAAEDRRREKQEEKMARERVREKIARDKADRARRFGGASSEPISPPAETSIPATTPSPSSPVQEPPTKKEYDQCRIQVRLLDGSALSQTFRAREQLAAVRLYVELNWPGGPPGPFSLLTSFPQRVFTEEDMEKPLQELGLVPTAVLIVAKK.

Residues 1 to 42 form the UBA domain; it reads MAECSTLESLIEMGFSSTRAEKALTATGNQGIEPAMDWLVEH. The tract at residues 43–216 is disordered; the sequence is EDDPDIDEPS…VQEPPTKKEY (174 aa). Positions 61–75 are enriched in low complexity; sequence TDTADTTDTTDTTDT. Basic and acidic residues-rich tracts occupy residues 86 to 100, 107 to 123, and 138 to 178; these read PLTEEEKEKQTKRMM, QNEREEREKKERIEQEK, and KMQE…DRAR. Positions 87–177 form a coiled coil; sequence LTEEEKEKQT…KIARDKADRA (91 aa). The span at 191 to 206 shows a compositional bias: low complexity; sequence PAETSIPATTPSPSSP. The 80-residue stretch at 214-293 folds into the UBX domain; it reads KEYDQCRIQV…GLVPTAVLIV (80 aa).

Its subcellular location is the cytoplasm. Functionally, component of a complex required to couple deglycosylation and proteasome-mediated degradation of misfolded proteins in the endoplasmic reticulum that are retrotranslocated in the cytosol. Involved in ubiquitin-proteasome systems. The polypeptide is UBX domain-containing protein 1-A (ubxn1-a) (Xenopus laevis (African clawed frog)).